We begin with the raw amino-acid sequence, 369 residues long: Short chain dehydrogenase rstn4 (369 aa).

Residues Lys88, Asp111, Asn138, Tyr234, and Lys238 each contribute to the NADP(+) site. The active-site Proton donor is the Tyr234. Lys238 acts as the Lowers pKa of active site Tyr in catalysis.

The protein belongs to the short-chain dehydrogenases/reductases (SDR) family.

It participates in antifungal biosynthesis. Functionally, short chain dehydrogenase; part of the gene cluster that mediates the biosynthesis of the tetrahydropyranyl antifungal agent restricticin that acts as an inhibitor of CYP51 and blocks the ergosterol biosynthesis. The highly reducing polyketide synthase rstn3, the short chain dehydrogenase rstn4, the cyclase rstn5, the FAD-dependent monooxygenase rstn6 and the enoylreductase rstn7 are required to generate the first stable intermediate desmethylrestrictinol. Rstn3 with rstn7 biosynthesize the first polyketide chain intermediate that is reduced by rstn4, followed by epoxidation by rstn6 before 6-endo cyclization via epoxide opening by rstn5 leads to desmethylrestrictinol. The methyltransferase rstn1 then catalyzes the C4 O-methylation of desmethylrestrictinol to produce restrictinol, and the nonribosomal peptide synthetase rstn8 catalyzes the C3 esterification of restrictinol with glycine that leads to restricticin. The protein is Short chain dehydrogenase rstn4 of Aspergillus nomiae NRRL (strain ATCC 15546 / NRRL 13137 / CBS 260.88 / M93).